The chain runs to 426 residues: UDP-N-acetylglucosamine--N-acetylmuramyl-(pentapeptide) pyrophosphoryl-undecaprenol N-acetylglucosamine transferase (426 aa).

Residues 28-30 (TGG), N140, R176, S204, I257, and Q302 contribute to the UDP-N-acetyl-alpha-D-glucosamine site. The interval 369 to 388 (AGNGPSGMGNGHSSEQPQER) is disordered.

Belongs to the glycosyltransferase 28 family. MurG subfamily.

The protein localises to the cell inner membrane. The catalysed reaction is di-trans,octa-cis-undecaprenyl diphospho-N-acetyl-alpha-D-muramoyl-L-alanyl-D-glutamyl-meso-2,6-diaminopimeloyl-D-alanyl-D-alanine + UDP-N-acetyl-alpha-D-glucosamine = di-trans,octa-cis-undecaprenyl diphospho-[N-acetyl-alpha-D-glucosaminyl-(1-&gt;4)]-N-acetyl-alpha-D-muramoyl-L-alanyl-D-glutamyl-meso-2,6-diaminopimeloyl-D-alanyl-D-alanine + UDP + H(+). It participates in cell wall biogenesis; peptidoglycan biosynthesis. Its function is as follows. Cell wall formation. Catalyzes the transfer of a GlcNAc subunit on undecaprenyl-pyrophosphoryl-MurNAc-pentapeptide (lipid intermediate I) to form undecaprenyl-pyrophosphoryl-MurNAc-(pentapeptide)GlcNAc (lipid intermediate II). The chain is UDP-N-acetylglucosamine--N-acetylmuramyl-(pentapeptide) pyrophosphoryl-undecaprenol N-acetylglucosamine transferase from Xanthomonas axonopodis pv. citri (strain 306).